Here is a 320-residue protein sequence, read N- to C-terminus: Cytochrome f (320 aa).

The N-terminal stretch at 1-35 is a signal peptide; sequence MQTRNTFSWIREEITRSISVLLMIYIITWASISSA. The heme site is built by tyrosine 36, cysteine 56, cysteine 59, and histidine 60. A helical transmembrane segment spans residues 286–306; that stretch reads VQGLLFFLGSVVLAQIFLVLK.

Belongs to the cytochrome f family. As to quaternary structure, the 4 large subunits of the cytochrome b6-f complex are cytochrome b6, subunit IV (17 kDa polypeptide, petD), cytochrome f and the Rieske protein, while the 4 small subunits are PetG, PetL, PetM and PetN. The complex functions as a dimer. It depends on heme as a cofactor.

It is found in the plastid. The protein localises to the chloroplast thylakoid membrane. Functionally, component of the cytochrome b6-f complex, which mediates electron transfer between photosystem II (PSII) and photosystem I (PSI), cyclic electron flow around PSI, and state transitions. The chain is Cytochrome f from Lobularia maritima (Sweet alyssum).